A 748-amino-acid polypeptide reads, in one-letter code: MNFQTTVVGYPRVGVGRPYKQALERFWSGKLDETGFRAAINELCHDRLATQAQRLDLVPVGDFSLYDHVLDTALMLGAVPARFGKVDAHNLQGYFALARGRDGLPALEMTKWFDTNYHYLVPEIPERWELQANLVLEQVRFAQNVVGAKARPVLLGPWTFLRLARLAGAELAQHLQQLTAMYAQIVRELNDCNVAFIQCDEPALVGDVTEEEWQAFAACYRELSKHGKIVVQTYYGDVTPWYRELCRLPIHGLGLDLVQGHANWAAIQYHGFPQDKILVAGVVNGRNVWRSDLADLYTKITGLSEFVAPERLILSSSCSLLHLPETVTAERNLPVAVSSGLAFAQERLAELELLANALRDGIASVQPTWDAALASRQQWLDGVGRIVPAVRERTAALGTETPARLAYAERVPLQQAKLNLPLLPTTTIGSFPQTAALRKARAEAKRNPTGYAETINAEIAHVIALQEQWGIDVLVHGEPERNDMVQFFAEHLAGYVATQEGWVQSYGSRCVRPPVIAGDVYRTAALSVAETAYAQSLTKRPVKGMLTGPVTMLQWSFVRDDLPRSAVAAQIGLALRDEVTDLEAAGINIIQIDEPAFREGLPLRRNDWQNYLDWAVRAFRIATSDAKPSTQIHTHMCYSDFNDIIAAIAALDADVISIEDARSAGSLLAGLEGRYTQQIGPGVYDIHSPNIPTVEQLVARMRQLLNYLPAEQLWINPDCGLKTRTYAEVAAALQAMVTATKQVRNQIS.

Position 111 (K111) interacts with 5-methyltetrahydropteroyltri-L-glutamate. L-homocysteine contacts are provided by residues 428 to 430 (IGS) and E478. L-methionine is bound by residues 428–430 (IGS) and E478. 5-methyltetrahydropteroyltri-L-glutamate is bound by residues 509–510 (RC) and W555. D593 provides a ligand contact to L-homocysteine. Residue D593 participates in L-methionine binding. 5-methyltetrahydropteroyltri-L-glutamate is bound at residue E599. H635, C637, and E659 together coordinate Zn(2+). The active-site Proton donor is the H687. Residue C719 coordinates Zn(2+).

The protein belongs to the vitamin-B12 independent methionine synthase family. It depends on Zn(2+) as a cofactor.

The enzyme catalyses 5-methyltetrahydropteroyltri-L-glutamate + L-homocysteine = tetrahydropteroyltri-L-glutamate + L-methionine. Its pathway is amino-acid biosynthesis; L-methionine biosynthesis via de novo pathway; L-methionine from L-homocysteine (MetE route): step 1/1. In terms of biological role, catalyzes the transfer of a methyl group from 5-methyltetrahydrofolate to homocysteine resulting in methionine formation. This chain is 5-methyltetrahydropteroyltriglutamate--homocysteine methyltransferase, found in Herpetosiphon aurantiacus (strain ATCC 23779 / DSM 785 / 114-95).